Reading from the N-terminus, the 288-residue chain is Ribosomal protein L11 methyltransferase (288 aa).

S-adenosyl-L-methionine is bound by residues T141, G164, D186, and N227.

Belongs to the methyltransferase superfamily. PrmA family.

The protein resides in the cytoplasm. The enzyme catalyses L-lysyl-[protein] + 3 S-adenosyl-L-methionine = N(6),N(6),N(6)-trimethyl-L-lysyl-[protein] + 3 S-adenosyl-L-homocysteine + 3 H(+). Methylates ribosomal protein L11. This chain is Ribosomal protein L11 methyltransferase, found in Myxococcus xanthus (strain DK1622).